The sequence spans 274 residues: Phosphoribosylaminoimidazole-succinocarboxamide synthase (274 aa).

It belongs to the SAICAR synthetase family.

The catalysed reaction is 5-amino-1-(5-phospho-D-ribosyl)imidazole-4-carboxylate + L-aspartate + ATP = (2S)-2-[5-amino-1-(5-phospho-beta-D-ribosyl)imidazole-4-carboxamido]succinate + ADP + phosphate + 2 H(+). It participates in purine metabolism; IMP biosynthesis via de novo pathway; 5-amino-1-(5-phospho-D-ribosyl)imidazole-4-carboxamide from 5-amino-1-(5-phospho-D-ribosyl)imidazole-4-carboxylate: step 1/2. The protein is Phosphoribosylaminoimidazole-succinocarboxamide synthase of Nitrosopumilus maritimus (strain SCM1).